We begin with the raw amino-acid sequence, 399 residues long: Phosphoglycerate kinase (399 aa).

Substrate is bound by residues 22-24, arginine 37, 60-63, arginine 119, and arginine 152; these read DLN and HFGR. Residues lysine 202, glutamate 324, and 354–357 contribute to the ATP site; that span reads GGDT.

This sequence belongs to the phosphoglycerate kinase family. In terms of assembly, monomer.

Its subcellular location is the cytoplasm. The catalysed reaction is (2R)-3-phosphoglycerate + ATP = (2R)-3-phospho-glyceroyl phosphate + ADP. The protein operates within carbohydrate degradation; glycolysis; pyruvate from D-glyceraldehyde 3-phosphate: step 2/5. The chain is Phosphoglycerate kinase from Rhizobium meliloti (strain 1021) (Ensifer meliloti).